A 155-amino-acid polypeptide reads, in one-letter code: D-aminoacyl-tRNA deacylase (155 aa).

The short motif at 137–138 is the Gly-cisPro motif, important for rejection of L-amino acids element; that stretch reads GP.

It belongs to the DTD family. As to quaternary structure, homodimer.

It localises to the cytoplasm. It catalyses the reaction glycyl-tRNA(Ala) + H2O = tRNA(Ala) + glycine + H(+). The catalysed reaction is a D-aminoacyl-tRNA + H2O = a tRNA + a D-alpha-amino acid + H(+). In terms of biological role, an aminoacyl-tRNA editing enzyme that deacylates mischarged D-aminoacyl-tRNAs. Also deacylates mischarged glycyl-tRNA(Ala), protecting cells against glycine mischarging by AlaRS. Acts via tRNA-based rather than protein-based catalysis; rejects L-amino acids rather than detecting D-amino acids in the active site. By recycling D-aminoacyl-tRNA to D-amino acids and free tRNA molecules, this enzyme counteracts the toxicity associated with the formation of D-aminoacyl-tRNA entities in vivo and helps enforce protein L-homochirality. This Paracidovorax citrulli (strain AAC00-1) (Acidovorax citrulli) protein is D-aminoacyl-tRNA deacylase.